The following is a 191-amino-acid chain: Calcium-binding protein L (191 aa).

Residue Gly2 is the site of N-myristoyl glycine attachment. 3 consecutive EF-hand domains span residues 25-59 (EQVS…RFKD), 60-95 (YDDA…ITKS), and 96-131 (PVSD…ALNT). Ca(2+) contacts are provided by Asp73, Asp75, Asn77, Arg79, and Glu84.

The protein belongs to the recoverin family.

This Dictyostelium discoideum (Social amoeba) protein is Calcium-binding protein L (cbpL).